The chain runs to 199 residues: Dephospho-CoA kinase (199 aa).

One can recognise a DPCK domain in the interval 3–199 (VLGLTGSIGM…AAARMPRRRP (197 aa)). ATP is bound at residue 11–16 (GMGKST).

Belongs to the CoaE family.

Its subcellular location is the cytoplasm. The catalysed reaction is 3'-dephospho-CoA + ATP = ADP + CoA + H(+). The protein operates within cofactor biosynthesis; coenzyme A biosynthesis; CoA from (R)-pantothenate: step 5/5. Functionally, catalyzes the phosphorylation of the 3'-hydroxyl group of dephosphocoenzyme A to form coenzyme A. The polypeptide is Dephospho-CoA kinase (Rhodopseudomonas palustris (strain HaA2)).